We begin with the raw amino-acid sequence, 425 residues long: Adenosine 3'-phospho 5'-phosphosulfate transporter 1 (425 aa).

The next 9 membrane-spanning stretches (helical) occupy residues 27-47 (FLIL…IYYV), 102-122 (VIIL…AMGV), 147-167 (TQFL…MILA), 232-252 (YSWF…LFLL), 263-283 (ITYT…FDAF), 303-323 (MMFG…IEQG), 342-360 (VFLL…YSTI), 365-387 (PIVF…TIMY), and 391-411 (LTFL…VDIH).

Belongs to the nucleotide-sugar transporter family. SLC35B subfamily.

It is found in the golgi apparatus membrane. Functionally, mediates the transport of adenosine 3'-phospho 5'-phosphosulfate (PAPS), from cytosol into Golgi. PAPS is a universal sulfuryl donor for sulfation events that take place in the Golgi. The polypeptide is Adenosine 3'-phospho 5'-phosphosulfate transporter 1 (pst-1) (Caenorhabditis elegans).